We begin with the raw amino-acid sequence, 308 residues long: Olfactory receptor 6F1 (308 aa).

Residues 1 to 25 (MDTGNKTLPQDFLLLGFPGSQTLQL) are Extracellular-facing. Asn5 is a glycosylation site (N-linked (GlcNAc...) asparagine). Residues 26–46 (SLFMLFLVMYILTVSGNVAIL) form a helical membrane-spanning segment. At 47 to 54 (MLVSTSHQ) the chain is on the cytoplasmic side. A helical membrane pass occupies residues 55–75 (LHTPMYFFLSNLSFLEIWYTT). Topologically, residues 76-99 (AAVPKALAILLGRSQTISFTSCLL) are extracellular. Cysteines 97 and 189 form a disulfide. Residues 100–120 (QMYFVFSLGCTEYFLLAAMAY) form a helical membrane-spanning segment. At 121–139 (DRCLAICYPLHYGAIMSSL) the chain is on the cytoplasmic side. The chain crosses the membrane as a helical span at residues 140 to 160 (LSAQLALGSWVCGFVAIAVPT). Residues 161–197 (ALISGLSFCGPRAINHFFCDIAPWIALACTNTQAVEL) lie on the Extracellular side of the membrane. A helical transmembrane segment spans residues 198-217 (VAFVIAVVVILSSCLITFVS). At 218 to 237 (YVYIISTILRIPSASGRSKA) the chain is on the cytoplasmic side. The helical transmembrane segment at 238 to 258 (FSTCSSHLTVVLIWYGSTVFL) threads the bilayer. Residues 259 to 271 (HVRTSIKDALDLI) lie on the Extracellular side of the membrane. Residues 272–292 (KAVHVLNTVVTPVLNPFIYTL) form a helical membrane-spanning segment. The Cytoplasmic portion of the chain corresponds to 293-308 (RNKEVRETLLKKWKGK).

The protein belongs to the G-protein coupled receptor 1 family.

It is found in the cell membrane. In terms of biological role, odorant receptor. This is Olfactory receptor 6F1 (OR6F1) from Homo sapiens (Human).